A 68-amino-acid chain; its full sequence is Copper transport protein ATOX1 (68 aa).

Residues 1 to 63 (MPKHEFSVDM…TLKKTGKTVS (63 aa)) enclose the HMA domain. Residues Cys-12 and Cys-15 each coordinate Cu cation. Ser-47 is modified (phosphoserine). Lys-60 is subject to N6-acetyllysine.

It belongs to the ATX1 family. In terms of assembly, homodimer. Interacts with ATP7B. Interacts with ATP7A. Interacts (via dimer form) with SLC31A1 (via C-terminal domain); this interaction improves ATOX1 stability and controls intracellular Cu(I) levels. Ubiquitous.

Its function is as follows. Binds and deliver cytosolic copper to the copper ATPase proteins. May be important in cellular antioxidant defense. This chain is Copper transport protein ATOX1, found in Homo sapiens (Human).